Consider the following 495-residue polypeptide: Dipeptide and tripeptide permease B (495 aa).

The Cytoplasmic segment spans residues 1–16; that stretch reads MDNKVSILNQPKPFKM. Residues 17 to 37 form a helical membrane-spanning segment; the sequence is IFFIELWERFGYYGLQGILAV. At 38–50 the chain is on the periplasmic side; it reads YFVDKLGFSMQDS. A helical membrane pass occupies residues 51–71; it reads FVTFGAFAALVYGLVSVGGYV. The Cytoplasmic portion of the chain corresponds to 72–80; the sequence is GDYVLGTKR. Residues 81-101 form a helical membrane-spanning segment; it reads TMVFGAVVLALGYFLMGFSIL. The Periplasmic portion of the chain corresponds to 102-104; sequence NPN. The chain crosses the membrane as a helical span at residues 105 to 125; it reads FIYVALGAIAVGNGLFKANPS. At 126–144 the chain is on the cytoplasmic side; sequence SLLAKCYEKGDSRLDGAFT. Residues 145–165 traverse the membrane as a helical segment; it reads LYYMSINIGSLVSLSISPVIA. Residues 166-170 are Periplasmic-facing; sequence NNYGY. The helical transmembrane segment at 171–191 threads the bilayer; sequence EYAFIICGLGLIASLFSYFSL. Residues 192-209 lie on the Cytoplasmic side of the membrane; it reads RSTVQGIGSEPDALPLNK. Residues 210-230 traverse the membrane as a helical segment; the sequence is TKALIVLIGTIASTLVCAWLL. Position 231 (glutamine 231) is a topological domain, periplasmic. Residues 232–252 form a helical membrane-spanning segment; that stretch reads NIMMANLALGLIGVGVVGFFL. At 253 to 265 the chain is on the cytoplasmic side; it reads KETFKEVGEQRNK. A helical membrane pass occupies residues 266–286; that stretch reads MIVAFILMLQAIIFYVLYAQM. The Periplasmic portion of the chain corresponds to 287–309; it reads PTSLNFFAINNVHSELFGMDINP. The helical transmembrane segment at 310-330 threads the bilayer; the sequence is VSLQALNPFWVIFCSPILAYL. Over 331–348 the chain is Cytoplasmic; sequence YTYYGNQNKDLSMPGKFT. The chain crosses the membrane as a helical span at residues 349–369; that stretch reads VGMFMCAFGFLSVAAAGNWFA. Residues 370 to 373 are Periplasmic-facing; it reads DQAG. The helical transmembrane segment at 374 to 394 threads the bilayer; the sequence is MVSVWWMVLVYLFQSLGELMI. At 395 to 409 the chain is on the cytoplasmic side; sequence SGLGLAMVASLVPQR. Residues 410 to 430 form a helical membrane-spanning segment; sequence LMGFTMGAWFLTQAASFIIGG. The Periplasmic portion of the chain corresponds to 431 to 454; the sequence is YVATFSATPEHLTDPLDTLPVYTE. The chain crosses the membrane as a helical span at residues 455 to 475; the sequence is LFQNIGFVTLAVAIVMAITAP. The Cytoplasmic segment spans residues 476–495; that stretch reads KLNKMMTSSQPEDAELVEQP.

This sequence belongs to the major facilitator superfamily. Proton-dependent oligopeptide transporter (POT/PTR) (TC 2.A.17) family. DtpB subfamily.

Its subcellular location is the cell inner membrane. Functionally, proton-dependent permease that transports di- and tripeptides. The polypeptide is Dipeptide and tripeptide permease B (Aliivibrio fischeri (strain MJ11) (Vibrio fischeri)).